Consider the following 531-residue polypeptide: Protein tweety homolog 2-like (531 aa).

Residues 1 to 44 are Extracellular-facing; the sequence is MASSRQDYIAPWWTYWLHNFPHLNFNFQTVDNTFKPEDASYQQS. The helical transmembrane segment at 45–65 threads the bilayer; the sequence is LVFLACVSAVALGLCLLLLSV. The Cytoplasmic portion of the chain corresponds to 66–87; it reads YLTCLCCCRREEDEEVKRPDTC. A helical membrane pass occupies residues 88–108; that stretch reads CVTWAAVITGLVICSAVGVGF. Over 109-213 the chain is Extracellular; sequence YGNSETNDGV…RTAFIEYYRW (105 aa). Residue N129 is glycosylated (N-linked (GlcNAc...) asparagine). The helical transmembrane segment at 214–234 threads the bilayer; sequence LTYLLLLILDLVICLLACLAL. Topologically, residues 235-239 are cytoplasmic; sequence AKQSR. The helical transmembrane segment at 240–260 threads the bilayer; it reads WLLTVIMVCGMLTLIMSWASL. Topologically, residues 261–389 are extracellular; it reads GAGTATAVGT…GVCYDGVEGL (129 aa). N-linked (GlcNAc...) asparagine glycans are attached at residues N283 and N352. Residues 390–410 form a helical membrane-spanning segment; the sequence is LYLCLFSLLAACAFCALLCAV. The Cytoplasmic portion of the chain corresponds to 411 to 531; it reads PRAWMLIAIR…IRHFGTDFQV (121 aa).

The protein belongs to the tweety family.

The protein resides in the cell membrane. Probable large-conductance Ca(2+)-activated chloride channel. The sequence is that of Protein tweety homolog 2-like (ttyh2l) from Danio rerio (Zebrafish).